A 292-amino-acid polypeptide reads, in one-letter code: Fat storage-inducing transmembrane protein 1 (292 aa).

Over Met-1–Gln-18 the chain is Lumenal. The helical transmembrane segment at Ala-19 to Gly-39 threads the bilayer. Topologically, residues Ser-40–Arg-54 are cytoplasmic. A helical membrane pass occupies residues Leu-55–Asn-75. At Pro-76–Ser-94 the chain is on the lumenal side. The chain crosses the membrane as a helical span at residues Ala-95–Thr-115. The Cytoplasmic segment spans residues Arg-116–Ala-141. Residues Phe-142–Leu-162 form a helical membrane-spanning segment. At His-163 to Thr-187 the chain is on the lumenal side. Residue His-186 is part of the active site. A helical transmembrane segment spans residues Phe-188–Leu-208. The Cytoplasmic portion of the chain corresponds to Ala-209–Leu-220. The chain crosses the membrane as a helical span at residues Val-221–Ile-241. The Lumenal segment spans residues Tyr-242–Lys-249. His-244 is an active-site residue. The helical transmembrane segment at Val-250–Gln-270 threads the bilayer. The Cytoplasmic segment spans residues Pro-271–Asn-292.

The protein belongs to the FIT family. FIT1 subfamily. As to expression, primarily expressed in heart and skeletal muscle.

The protein localises to the endoplasmic reticulum membrane. Plays an important role in the formation of lipid droplets (LDs) which are storage organelles at the center of lipid and energy homeostasis. Directly binds to diacylglycerol (DAGs) and triacylglycerol. The chain is Fat storage-inducing transmembrane protein 1 from Homo sapiens (Human).